A 432-amino-acid chain; its full sequence is tRNA(Ile)-lysidine synthase (432 aa).

20–25 (SGGLDS) provides a ligand contact to ATP.

This sequence belongs to the tRNA(Ile)-lysidine synthase family.

It is found in the cytoplasm. It catalyses the reaction cytidine(34) in tRNA(Ile2) + L-lysine + ATP = lysidine(34) in tRNA(Ile2) + AMP + diphosphate + H(+). Ligates lysine onto the cytidine present at position 34 of the AUA codon-specific tRNA(Ile) that contains the anticodon CAU, in an ATP-dependent manner. Cytidine is converted to lysidine, thus changing the amino acid specificity of the tRNA from methionine to isoleucine. This Shigella flexneri protein is tRNA(Ile)-lysidine synthase.